The chain runs to 439 residues: MEPWCGAEVRGQGPQGPRVPGASRSRSRALLLLLLLLLLLLPRRPAGERIRPRRPPRHAHPRPPLTRWRPSTGYLAAGASPGTLSTTVPTGPGVSCGSRGICPSGRLRLPRQAQTNQTTTAPPNSQTMAPLKTVGTLGMMDTTGSVLKTVHSSNLPFCGSSHEPDPTLRDPEAMTRRWPWMVSVQANGSHICAGILIASQWVLTVAHCLSQNHVNYIVRAGSPWINQTAGTSSDVPVHRVIINHGYQPRRYWSWVGRAHDIGLLKLKWGLKYSKYVWPICLPGLDYVVEDSSLCTVTGWGYPRANGIWPQFQSLQEKEVSILNSKKCDHFYHKFSRISSLVRIINPQMICASDNNREEFCYEITGEPLVCSSDGTWYLVGMMSWGPGCKKSEAPPIFLQVSYYRPWIWDRLSGEPLALPAPSRTLLLAFLLLLILLGTL.

Disordered regions lie at residues 1–22 (MEPWCGAEVRGQGPQGPRVPGA) and 48–130 (ERIR…TMAP). The first 47 residues, 1 to 47 (MEPWCGAEVRGQGPQGPRVPGASRSRSRALLLLLLLLLLLLPRRPAG), serve as a signal peptide directing secretion. The span at 9–21 (VRGQGPQGPRVPG) shows a compositional bias: low complexity. Residues 48-415 (ERIRPRRPPR…WIWDRLSGEP (368 aa)) are Extracellular-facing. Over residues 51 to 61 (RPRRPPRHAHP) the composition is skewed to basic residues. Over residues 112–127 (QAQTNQTTTAPPNSQT) the composition is skewed to low complexity. N-linked (GlcNAc...) asparagine glycans are attached at residues N116 and N187. The Peptidase S1 domain occupies 157–412 (FCGSSHEPDP…YRPWIWDRLS (256 aa)). Residues C192 and C208 are joined by a disulfide bond. The active-site Charge relay system is the H207. N226 is a glycosylation site (N-linked (GlcNAc...) asparagine). Catalysis depends on D260, which acts as the Charge relay system. Disulfide bonds link C294/C370, C327/C350, and C360/C388. The active-site Charge relay system is T364. The chain crosses the membrane as a helical span at residues 416–436 (LALPAPSRTLLLAFLLLLILL). Residues 437 to 439 (GTL) are Cytoplasmic-facing.

This sequence belongs to the peptidase S1 family.

It is found in the membrane. In terms of biological role, may be involved in proteolysis through its threonine endopeptidase activity. The sequence is that of Probable threonine protease PRSS50 (Prss50) from Mus musculus (Mouse).